The following is a 246-amino-acid chain: MAEQEQRKIPLVPENLLKKRKAYQALKATQAEQALLAKKEQRKGKGLRFKRLESFLHDSWRQKRDMVRLRRLEMKPHALELPDKHSLAFVVRIERIDGVSLLVQRTIARLRLKKIFSGVFVKVTPQNLKMLRIVEPYVTWGFPNLKSVRELILKRGQAKVKNKTIPLTDNTVIEEHLGKFGVICLEDLIHEIAFPGKHFQEISWFLRPFHLSVARHATKNRVGFLKEMGTPGYRGERINQLIRQLN.

S54 carries the phosphoserine modification.

Belongs to the universal ribosomal protein uL30 family.

This chain is Large ribosomal subunit protein uL30-like 1 (RPL7L1), found in Pongo abelii (Sumatran orangutan).